Reading from the N-terminus, the 915-residue chain is Mitogen-activated protein kinase kinae kinase MST11 (915 aa).

3 disordered regions span residues 1 to 65, 134 to 171, and 183 to 249; these read MAML…PKHW, KKRN…NPSV, and GMAY…TRTD. Residues 26–45 show a composition bias toward low complexity; it reads AQASYPPSRRAPAVPPASQS. Residues 65–128 enclose the SAM domain; that stretch reads WDEDKVCEYL…FLSIKKLRTK (64 aa). Composition is skewed to low complexity over residues 152–163 and 188–203; these read SESPSKPFHSSS and PSRP…PLPS. The Ras-associating domain occupies 263–353; that stretch reads NQDVIRVIST…NRLILRRVPA (91 aa). The Protein kinase domain occupies 641–911; it reads WMKGALIGQG…ADDLMLSPFL (271 aa). ATP contacts are provided by residues 647–655 and K670; that span reads IGQGSFGCV.

The protein belongs to the protein kinase superfamily. STE Ser/Thr protein kinase family. MAP kinase kinase kinase subfamily. Interacts with the adapter protein MST50.

It carries out the reaction L-seryl-[protein] + ATP = O-phospho-L-seryl-[protein] + ADP + H(+). It catalyses the reaction L-threonyl-[protein] + ATP = O-phospho-L-threonyl-[protein] + ADP + H(+). Functionally, mitogen-activated protein kinase kinase kinase; part of the MST11-MST7-PMK1 MAP kinase (MAPK) cascade that is essential for appressorium formation, penetration and invasive growth. The MST11-MST7-PMK1 MAP kinase cascade transduces signals from the cell surface sensors MDB2 and SHO1 that recognize various surface signals such as surface hydrophobicity, cutin monomers, and rice leaf waxes. MST11 acts as the upstream MAPKKK that directly phosphorylates MAPKK MST7. MST11 but not MST7 may also be involved in the OSM1 MAPK pathway in response to osmotic stresses. The chain is Mitogen-activated protein kinase kinae kinase MST11 from Pyricularia oryzae (strain 70-15 / ATCC MYA-4617 / FGSC 8958) (Rice blast fungus).